The following is a 406-amino-acid chain: Succinylornithine transaminase (406 aa).

Lys-252 carries the N6-(pyridoxal phosphate)lysine modification.

This sequence belongs to the class-III pyridoxal-phosphate-dependent aminotransferase family. AstC subfamily. It depends on pyridoxal 5'-phosphate as a cofactor.

The catalysed reaction is N(2)-succinyl-L-ornithine + 2-oxoglutarate = N-succinyl-L-glutamate 5-semialdehyde + L-glutamate. The protein operates within amino-acid degradation; L-arginine degradation via AST pathway; L-glutamate and succinate from L-arginine: step 3/5. Functionally, catalyzes the transamination of N(2)-succinylornithine and alpha-ketoglutarate into N(2)-succinylglutamate semialdehyde and glutamate. Can also act as an acetylornithine aminotransferase. The polypeptide is Succinylornithine transaminase (Escherichia coli O7:K1 (strain IAI39 / ExPEC)).